A 244-amino-acid chain; its full sequence is Monothiol glutaredoxin-4 (244 aa).

The region spanning 2-106 is the Thioredoxin domain; that stretch reads SVEITFVEQF…LKAAIDEYIQ (105 aa). The Glutaredoxin domain maps to 147–244; it reads NERLSTLTNA…NGELQEMLPN (98 aa). A glutathione-binding site is contributed by K164. C172 lines the [2Fe-2S] cluster pocket. Residues 201 to 205 and 226 to 227 contribute to the glutathione site; these read RQGLK and LD.

Belongs to the glutaredoxin family. Monothiol subfamily. As to quaternary structure, homodimer. Interacts with php4.

It is found in the cytoplasm. It localises to the nucleus. Its function is as follows. Monothiol glutaredoxin involved in the biogenesis of iron-sulfur clusters. Binds one iron-sulfur cluster per dimer. The iron-sulfur cluster is bound between subunits, and is complexed by a bound glutathione and a cysteine residue from each subunit. This is Monothiol glutaredoxin-4 (grx4) from Schizosaccharomyces pombe (strain 972 / ATCC 24843) (Fission yeast).